The following is a 248-amino-acid chain: Transmembrane protein 182 (248 aa).

Positions 1 to 26 (MKIHVAGFFAGLFGALATLFILLSFG) are cleaved as a signal peptide. The Extracellular portion of the chain corresponds to 27-136 (TDYWLLASET…IIYRGFWSVS (110 aa)). Asparagine 66 and asparagine 119 each carry an N-linked (GlcNAc...) asparagine glycan. Residues 137–157 (MLVGVAAVVAGGFIIICAAPF) form a helical membrane-spanning segment. Residues 158–167 (ASHRLYKAGG) lie on the Cytoplasmic side of the membrane. A helical transmembrane segment spans residues 168–188 (GLYLISGFFVLVVTAMYVIWI). Residues 189 to 218 (DVLDVISLYTEYQKLNKCADFELNKTYGLS) are Extracellular-facing. Asparagine 212 is a glycosylation site (N-linked (GlcNAc...) asparagine). A helical transmembrane segment spans residues 219 to 239 (FMFAPVGVFFCFLSGLLFLVI). Residues 240–248 (GRTVHHQYN) lie on the Cytoplasmic side of the membrane.

This sequence belongs to the TMEM182 family.

Its subcellular location is the cell membrane. May negatively regulate myogenesis and skeletal muscle regeneration. The protein is Transmembrane protein 182 (tmem182a) of Danio rerio (Zebrafish).